The primary structure comprises 313 residues: Protein sprouty homolog 1 (313 aa).

Met1 is subject to N-acetylmethionine. Positions 43–152 (QIKAIRGSNE…RSDRVIRTQP (110 aa)) are disordered. Residues 69–79 (PRPEKQERTHE) show a composition bias toward basic and acidic residues. Over residues 106–125 (SRSTSTGSAASSGSSSSVSS) the composition is skewed to low complexity. The region spanning 177–289 (QCGKCKCGEC…CYDWTHRPGC (113 aa)) is the SPR domain.

Belongs to the sprouty family. In terms of assembly, forms heterodimers with SPRY2. Interacts with TESK1. Interacts with CAV1 (via C-terminus).

It localises to the cytoplasm. It is found in the membrane. Its function is as follows. Inhibits fibroblast growth factor (FGF)-induced retinal lens fiber differentiation, probably by inhibiting FGF-mediated phosphorylation of ERK1/2. Inhibits TGFB-induced epithelial-to-mesenchymal transition in lens epithelial cells. The chain is Protein sprouty homolog 1 (Spry1) from Mus musculus (Mouse).